The following is a 396-amino-acid chain: Purine ribonucleoside efflux pump NepI (396 aa).

Residues 1 to 21 (MSEFIAENRGADAITRPNWSA) are Cytoplasmic-facing. Residues 22-42 (VFSVAFCVACLIIVEFLPVSL) traverse the membrane as a helical segment. At 43–54 (LTPMAQDLGISE) the chain is on the periplasmic side. Residues 55 to 75 (GVAGQSVTVTAFVAMFASLFI) form a helical membrane-spanning segment. The Cytoplasmic portion of the chain corresponds to 76–85 (TQTIQATDRC). Residues 86–106 (YVVILFAVLLTLSCLLVSFAN) form a helical membrane-spanning segment. Ser107 is a topological domain (periplasmic). Residues 108-128 (FSLLLIGRACLGLALGGFWAM) traverse the membrane as a helical segment. Residues 129-147 (SASLTMRLVPPRTVPKALS) are Cytoplasmic-facing. A helical transmembrane segment spans residues 148–168 (VIFGAVSIALVIAAPLGSFLG). Over 169-175 (ELIGWRN) the chain is Periplasmic. The helical transmembrane segment at 176–196 (VFNAAAVMGVLCIFWIIKSLP) threads the bilayer. Residues 197-215 (SLPGEPSHQKQNTFRLLQR) lie on the Cytoplasmic side of the membrane. A helical membrane pass occupies residues 216-236 (PGVMAGMIAIFMSFAGQFAFF). Topologically, residues 237 to 255 (TYIRPVYMNLAGFGVDGLT) are periplasmic. The chain crosses the membrane as a helical span at residues 256 to 276 (LVLLSFGIASFIGTSLSSFIL). Topologically, residues 277–281 (KRSVK) are cytoplasmic. The chain crosses the membrane as a helical span at residues 282 to 302 (LALAGAPLILAVSALVLTLWG). The Periplasmic segment spans residues 303 to 305 (SDK). A helical membrane pass occupies residues 306 to 326 (IVATGVAIIWGLTFALVPVGW). At 327–343 (STWITRSLADQAEKAGS) the chain is on the cytoplasmic side. Residues 344–364 (IQVAVIQLANTCGAAIGGYAL) form a helical membrane-spanning segment. The Periplasmic segment spans residues 365–366 (DN). The helical transmembrane segment at 367 to 387 (IGLTSPLMLSGTLMLLTALLV) threads the bilayer. At 388–396 (TAKVKMKKS) the chain is on the cytoplasmic side.

This sequence belongs to the major facilitator superfamily. DHA1 family. NepI (TC 2.A.1.2.26) subfamily.

The protein localises to the cell inner membrane. It catalyses the reaction inosine(in) + H(+)(out) = inosine(out) + H(+)(in). It carries out the reaction guanosine(in) + H(+)(out) = guanosine(out) + H(+)(in). Involved in the efflux of purine ribonucleosides, such as inosine and guanosine. The protein is Purine ribonucleoside efflux pump NepI of Shigella boydii serotype 4 (strain Sb227).